A 483-amino-acid chain; its full sequence is 2-methylcitrate dehydratase (483 aa).

This sequence belongs to the PrpD family. As to quaternary structure, monomer.

The enzyme catalyses (2S,3S)-2-methylcitrate = 2-methyl-cis-aconitate + H2O. The catalysed reaction is citrate = D-threo-isocitrate. Its pathway is organic acid metabolism; propanoate degradation. The protein operates within carbohydrate metabolism; tricarboxylic acid cycle; isocitrate from oxaloacetate: step 2/2. Functionally, involved in the catabolism of short chain fatty acids (SCFA) via the tricarboxylic acid (TCA)(acetyl degradation route) and via the 2-methylcitrate cycle I (propionate degradation route). Catalyzes the dehydration of 2-methylcitrate (2-MC) to yield the cis isomer of 2-methyl-aconitate. It is also able to catalyze the dehydration of citrate and the hydration of cis-aconitate at a lower rate. Due to its broad substrate specificity, it seems to be responsible for the residual aconitase activity of the acnAB-null mutant. This is 2-methylcitrate dehydratase from Escherichia coli (strain K12).